The sequence spans 447 residues: Phosphoglucosamine mutase (447 aa).

Catalysis depends on Ser107, which acts as the Phosphoserine intermediate. Mg(2+) is bound by residues Ser107, Asp246, Asp248, and Asp250. Ser107 bears the Phosphoserine mark.

This sequence belongs to the phosphohexose mutase family. It depends on Mg(2+) as a cofactor. In terms of processing, activated by phosphorylation.

It catalyses the reaction alpha-D-glucosamine 1-phosphate = D-glucosamine 6-phosphate. Catalyzes the conversion of glucosamine-6-phosphate to glucosamine-1-phosphate. The chain is Phosphoglucosamine mutase from Ralstonia nicotianae (strain ATCC BAA-1114 / GMI1000) (Ralstonia solanacearum).